A 1102-amino-acid polypeptide reads, in one-letter code: Endocytosis protein end4 (1102 aa).

Residues 9 to 139 (DHMQSDASLM…SFHAQHPEFN (131 aa)) enclose the ENTH domain. Residues 265–334 (PHDPPDLEGD…SEPEPIQDFW (70 aa)) are disordered. A compositionally biased stretch (polar residues) spans 292–305 (TGASTIAPQPTGTS). Positions 338–661 (TLDQQLAAQQ…ESLLQLSKLQ (324 aa)) form a coiled coil. Residues 858 to 1100 (LLNAPGENIE…DMRKTSYHVA (243 aa)) enclose the I/LWEQ domain.

Belongs to the SLA2 family.

It is found in the cytoplasm. It localises to the cytoskeleton. Functionally, required for cellular morphogenesis and polarization of the cortical cytoskeleton. Required for establishment of new polarized growth zones where it acts in actin organization. Involved plasma membrane internalization and is essential for fluid-phase endocytosis. In Schizosaccharomyces pombe (strain 972 / ATCC 24843) (Fission yeast), this protein is Endocytosis protein end4 (end4).